Reading from the N-terminus, the 448-residue chain is 4-hydroxybenzoate transporter PcaK (448 aa).

The Cytoplasmic segment spans residues 1–30 (MNSPSLPAVERLDVQAFINAQPLSPYQWRI). A helical transmembrane segment spans residues 31-51 (VLLCFLIVFLDGLDTAAMGFI). The Periplasmic portion of the chain corresponds to 52 to 67 (APALTQDWGIDRASLG). Residues 68–88 (PVMSAALIGMVFGALGSGPLA) form a helical membrane-spanning segment. Residues 89 to 94 (DRYGRK) are Cytoplasmic-facing. Residues 95–115 (LVLVAAVFLFGLFSLASAYST) form a helical membrane-spanning segment. At 116-119 (NVEQ) the chain is on the periplasmic side. A helical membrane pass occupies residues 120–140 (LLALRFLTGLGLGAAMPNATT). Residues 141-152 (LLSEYTPERLKS) are Cytoplasmic-facing. Residues 153-173 (LLVTSMFCGFNLGMACGGFVS) traverse the membrane as a helical segment. The Periplasmic portion of the chain corresponds to 174-184 (AKLIPLFGWHS). Residues 185-205 (LLLLGGLLPLVLAVVLLFRLP) form a helical membrane-spanning segment. Residues 206–261 (ESARYLVVRNRGSERVRQVLAPIAPAQVALARSFHVPEQQTVQARNVFAVIFSGTY) lie on the Cytoplasmic side of the membrane. A helical transmembrane segment spans residues 262-282 (SAGTLLLWLTYFMGLVIVYLL). Residues 283-301 (TSWLPTLMRDSGASLEQAA) lie on the Periplasmic side of the membrane. Residues 302 to 322 (FIGALFQFGGVLSAVAVGWAM) traverse the membrane as a helical segment. The Cytoplasmic portion of the chain corresponds to 323–329 (DRFNPHK). The helical transmembrane segment at 330–350 (VIGLFYLLAGVFAWCVGQSLG) threads the bilayer. Q351 is a topological domain (periplasmic). Residues 352–372 (VTLLATLVLLAGMCINGAQSA) traverse the membrane as a helical segment. Over 373-398 (MPSLAARFYPTQGRATGVSWMLGIGR) the chain is Cytoplasmic. The helical transmembrane segment at 399-419 (FGAILGAWIGATLLGLGWNFE) threads the bilayer. The Periplasmic portion of the chain corresponds to 420–421 (QV). Residues 422–442 (LTALVLPAALATAAVLLKGLV) form a helical membrane-spanning segment. The Cytoplasmic portion of the chain corresponds to 443 to 448 (SHADAG).

The protein belongs to the major facilitator superfamily. Aromatic acid:H(+) symporter (AAHS) (TC 2.A.1.15) family.

It localises to the cell inner membrane. Transports 4-hydroxybenzoate (4-HBA) and protocatechuate across the membrane. Driven by the proton motive force. Also functions as a chemoreceptor, which is required for chemotaxis to aromatic acids. This is 4-hydroxybenzoate transporter PcaK (pcaK) from Pseudomonas aeruginosa (strain ATCC 15692 / DSM 22644 / CIP 104116 / JCM 14847 / LMG 12228 / 1C / PRS 101 / PAO1).